The following is a 311-amino-acid chain: Homeobox protein knotted-1-like 10 (311 aa).

Disordered stretches follow at residues 1-45 (MEDL…PATT) and 153-184 (LCGG…DAAD). The segment covering 12 to 22 (SRGGGGGGGGA) has biased composition (gly residues). One can recognise an ELK domain in the interval 197 to 217 (ELKEMLLKKYSGCLSRLRSEF). The segment at residues 218-281 (LKKRKKGKLP…NQRKRHWKPS (64 aa)) is a DNA-binding region (homeobox; TALE-type).

Belongs to the TALE/KNOX homeobox family.

Its subcellular location is the nucleus. Probable transcription factor that may be involved in shoot formation during embryogenesis. This Oryza sativa subsp. indica (Rice) protein is Homeobox protein knotted-1-like 10 (OSH71).